A 184-amino-acid polypeptide reads, in one-letter code: Putative YfeABCD regulator YfeE (184 aa).

3 consecutive transmembrane segments (helical) span residues 15 to 35 (IAGW…IINF), 84 to 104 (LSAG…GLSL), and 162 to 182 (ILPS…GIMI).

It to E.coli YniB.

It is found in the cell membrane. In terms of biological role, putative regulator of YfeABCD, an ABC transporter locus involved in inorganic iron transport. This chain is Putative YfeABCD regulator YfeE (yfeE), found in Yersinia pestis.